The sequence spans 224 residues: MDQFIKQDETGDLIETGMNVANHFLSAPIQGTNSLSKATIIPGVAPVLIGNPEQKNIQYPTTSHQGSKSKGRGSGARPIIVSSSEGGTGGTQVPEPLFAQTGQGGIVTTVYQDPTIQPTGSYRSVELAKIGKERMINRFVEKPRTSTPVTEFKRGAGSGCSRPDNPRGGHRREWSLSWVQGEVRVFEWCNPICSPITAAARFHSCKCGNCPAKCDQCERDYGPP.

Polar residues predominate over residues 55–65 (KNIQYPTTSHQ). 2 disordered regions span residues 55–90 (KNIQ…GTGG) and 145–172 (TSTP…GHRR). Positions 170, 189, 193, 205, 207, 210, 214, and 217 each coordinate Zn(2+).

It belongs to the paramyxoviruses V protein family. As to quaternary structure, interacts with host IFIH1/MDA5 and DHX58/LGP2. Forms with host DDB1, CUL4A, STAT1, STAT2 and STAT3 the mumps virus V-dependent complex (VDC).

It is found in the virion. Its subcellular location is the host cytoplasm. Functionally, plays an essential role in the inhibition of host immune response. Prevents the establishment of cellular antiviral state by blocking interferon-alpha/beta (IFN-alpha/beta) production and signaling pathway. Interacts with host IFIH1/MDA5 and DHX58/LGP2 to inhibit the transduction pathway involved in the activation of IFN-beta promoter, thus protecting the virus against cell antiviral state. Blocks the type I and II interferon signaling pathways by interacting with host STAT1, STAT2 and STAT3, and mediating their ubiquitination and subsequent proteasomal degradation. The polypeptide is Non-structural protein V (Mumps virus genotype B (strain Miyahara vaccine) (MuV)).